Here is a 488-residue protein sequence, read N- to C-terminus: Diacylglycerol kinase 3 (488 aa).

A disordered region spans residues 1-24 (MDSPVSKTDASKEKFVASRPSTAD). The DAGKc domain occupies 87-245 (APHAPMVVFI…SWKILVSMPS (159 aa)).

It belongs to the eukaryotic diacylglycerol kinase family. In terms of assembly, monomer.

It catalyses the reaction a 1,2-diacyl-sn-glycerol + ATP = a 1,2-diacyl-sn-glycero-3-phosphate + ADP + H(+). In terms of biological role, phosphorylates the second messenger diacylglycerol (DAG) to generate phosphatidic acid (PA), another important signaling molecule. PA is required for plant development and responses to abiotic stress and pathogen attack. May be involved in the accumulation of PA during cold stress. The polypeptide is Diacylglycerol kinase 3 (DGK3) (Arabidopsis thaliana (Mouse-ear cress)).